The following is a 283-amino-acid chain: Phosphatidylglycerol--prolipoprotein diacylglyceryl transferase (283 aa).

The next 7 membrane-spanning stretches (helical) occupy residues 18–38, 62–82, 106–126, 136–156, 190–210, 218–238, and 252–272; these read LGGI…VVAF, YFLW…VLIY, FIGI…IASY, LLIY…FGRI, PSQL…VMWA, GLLI…AEFY, and LSMG…ILLY. Position 155 (R155) interacts with a 1,2-diacyl-sn-glycero-3-phospho-(1'-sn-glycerol).

It belongs to the Lgt family.

Its subcellular location is the cell inner membrane. It carries out the reaction L-cysteinyl-[prolipoprotein] + a 1,2-diacyl-sn-glycero-3-phospho-(1'-sn-glycerol) = an S-1,2-diacyl-sn-glyceryl-L-cysteinyl-[prolipoprotein] + sn-glycerol 1-phosphate + H(+). It participates in protein modification; lipoprotein biosynthesis (diacylglyceryl transfer). Its function is as follows. Catalyzes the transfer of the diacylglyceryl group from phosphatidylglycerol to the sulfhydryl group of the N-terminal cysteine of a prolipoprotein, the first step in the formation of mature lipoproteins. The polypeptide is Phosphatidylglycerol--prolipoprotein diacylglyceryl transferase (Helicobacter pylori (strain J99 / ATCC 700824) (Campylobacter pylori J99)).